The sequence spans 216 residues: Octanoyltransferase (216 aa).

The BPL/LPL catalytic domain maps to 32-211; the sequence is QEASEMLWFL…RFPYFLEALQ (180 aa). Substrate-binding positions include 71 to 78, 142 to 144, and 155 to 157; these read RGGRYTYH, AIG, and GFS. Cys173 serves as the catalytic Acyl-thioester intermediate.

It belongs to the LipB family.

The protein localises to the cytoplasm. It catalyses the reaction octanoyl-[ACP] + L-lysyl-[protein] = N(6)-octanoyl-L-lysyl-[protein] + holo-[ACP] + H(+). It participates in protein modification; protein lipoylation via endogenous pathway; protein N(6)-(lipoyl)lysine from octanoyl-[acyl-carrier-protein]: step 1/2. Functionally, catalyzes the transfer of endogenously produced octanoic acid from octanoyl-acyl-carrier-protein onto the lipoyl domains of lipoate-dependent enzymes. Lipoyl-ACP can also act as a substrate although octanoyl-ACP is likely to be the physiological substrate. This Zymomonas mobilis subsp. mobilis (strain ATCC 31821 / ZM4 / CP4) protein is Octanoyltransferase.